We begin with the raw amino-acid sequence, 213 residues long: High frequency lysogenization protein HflD homolog (213 aa).

The stretch at 79-122 (QGLNAELTRYTLSLMVLERKLSSAKGALNTLGDRINGLQRQLDH) forms a coiled coil.

Belongs to the HflD family.

It localises to the cytoplasm. The protein resides in the cell inner membrane. The protein is High frequency lysogenization protein HflD homolog of Salmonella dublin (strain CT_02021853).